The primary structure comprises 419 residues: Light-independent protochlorophyllide reductase subunit N (419 aa).

The [4Fe-4S] cluster site is built by Cys20, Cys45, and Cys102.

This sequence belongs to the BchN/ChlN family. In terms of assembly, protochlorophyllide reductase is composed of three subunits; BchL, BchN and BchB. Forms a heterotetramer of two BchB and two BchN subunits. It depends on [4Fe-4S] cluster as a cofactor.

The enzyme catalyses chlorophyllide a + oxidized 2[4Fe-4S]-[ferredoxin] + 2 ADP + 2 phosphate = protochlorophyllide a + reduced 2[4Fe-4S]-[ferredoxin] + 2 ATP + 2 H2O. It participates in porphyrin-containing compound metabolism; bacteriochlorophyll biosynthesis (light-independent). Functionally, component of the dark-operative protochlorophyllide reductase (DPOR) that uses Mg-ATP and reduced ferredoxin to reduce ring D of protochlorophyllide (Pchlide) to form chlorophyllide a (Chlide). This reaction is light-independent. The NB-protein (BchN-BchB) is the catalytic component of the complex. This Chlorobaculum tepidum (strain ATCC 49652 / DSM 12025 / NBRC 103806 / TLS) (Chlorobium tepidum) protein is Light-independent protochlorophyllide reductase subunit N.